The following is a 474-amino-acid chain: Dihydrolipoyl dehydrogenase (474 aa).

Residues 39–47, lysine 56, and alanine 118 each bind FAD; that span reads EKDAYGGTC. An intrachain disulfide couples cysteine 47 to cysteine 52. NAD(+) is bound by residues 186–190, glutamate 209, and 275–278; these read GGGYI and AVGR. FAD is bound by residues aspartate 318 and alanine 326. Histidine 450 serves as the catalytic Proton acceptor.

The protein belongs to the class-I pyridine nucleotide-disulfide oxidoreductase family. In terms of assembly, homodimer. FAD is required as a cofactor.

The protein localises to the cytoplasm. It carries out the reaction N(6)-[(R)-dihydrolipoyl]-L-lysyl-[protein] + NAD(+) = N(6)-[(R)-lipoyl]-L-lysyl-[protein] + NADH + H(+). This chain is Dihydrolipoyl dehydrogenase (lpdA), found in Halobacterium salinarum (strain ATCC 700922 / JCM 11081 / NRC-1) (Halobacterium halobium).